The sequence spans 167 residues: Endoribonuclease YbeY (167 aa).

Residues H131, H135, and H141 each coordinate Zn(2+).

It belongs to the endoribonuclease YbeY family. The cofactor is Zn(2+).

It is found in the cytoplasm. Single strand-specific metallo-endoribonuclease involved in late-stage 70S ribosome quality control and in maturation of the 3' terminus of the 16S rRNA. The protein is Endoribonuclease YbeY of Rickettsia rickettsii (strain Iowa).